The following is a 418-amino-acid chain: Gamma-glutamyl phosphate reductase (418 aa).

It belongs to the gamma-glutamyl phosphate reductase family.

Its subcellular location is the cytoplasm. The enzyme catalyses L-glutamate 5-semialdehyde + phosphate + NADP(+) = L-glutamyl 5-phosphate + NADPH + H(+). It functions in the pathway amino-acid biosynthesis; L-proline biosynthesis; L-glutamate 5-semialdehyde from L-glutamate: step 2/2. In terms of biological role, catalyzes the NADPH-dependent reduction of L-glutamate 5-phosphate into L-glutamate 5-semialdehyde and phosphate. The product spontaneously undergoes cyclization to form 1-pyrroline-5-carboxylate. The chain is Gamma-glutamyl phosphate reductase from Photobacterium profundum (strain SS9).